The sequence spans 389 residues: tRNA-specific 2-thiouridylase MnmA (389 aa).

Residues 35–42 (GMSGGVDS) and methionine 61 contribute to the ATP site. Residues 121 to 123 (NPD) form an interaction with target base in tRNA region. The active-site Nucleophile is the cysteine 126. An intrachain disulfide couples cysteine 126 to cysteine 223. Glycine 151 contributes to the ATP binding site. The segment at 173 to 175 (KDQ) is interaction with tRNA. The active-site Cysteine persulfide intermediate is cysteine 223. The segment at 335 to 336 (RY) is interaction with tRNA.

This sequence belongs to the MnmA/TRMU family.

Its subcellular location is the cytoplasm. It carries out the reaction S-sulfanyl-L-cysteinyl-[protein] + uridine(34) in tRNA + AH2 + ATP = 2-thiouridine(34) in tRNA + L-cysteinyl-[protein] + A + AMP + diphosphate + H(+). Functionally, catalyzes the 2-thiolation of uridine at the wobble position (U34) of tRNA, leading to the formation of s(2)U34. The sequence is that of tRNA-specific 2-thiouridylase MnmA from Actinobacillus pleuropneumoniae serotype 3 (strain JL03).